A 102-amino-acid polypeptide reads, in one-letter code: Cytochrome c3 (102 aa).

Residues His-26, His-29, Cys-34, Cys-37, His-38, His-39, Cys-50, Cys-55, His-56, His-73, Cys-81, Cys-84, His-85, Cys-95, Cys-98, and His-99 each coordinate heme c.

Heme is required as a cofactor.

Its subcellular location is the periplasm. Its function is as follows. Participates in sulfate respiration coupled with phosphorylation by transferring electrons from the enzyme dehydrogenase to ferredoxin. This is Cytochrome c3 from Desulfovibrio desulfuricans.